Consider the following 425-residue polypeptide: UPF0761 membrane protein xcc-b100_3490 (425 aa).

6 helical membrane passes run 48 to 68 (VFALVPLAIVVFGVLSAFPAF), 105 to 125 (FTVAGMVALVASLLITLHSIE), 154 to 174 (GTMLAAASMAMAAYVFALPLF), 182 to 202 (LAEFAWRLAPMAVEFVCIVLI), 216 to 236 (ALPGALLAVILMEIVKWGFGF), and 250 to 270 (ALSALPILLLWIYLSWVSVLL).

This sequence belongs to the UPF0761 family.

It localises to the cell inner membrane. The polypeptide is UPF0761 membrane protein xcc-b100_3490 (Xanthomonas campestris pv. campestris (strain B100)).